A 250-amino-acid chain; its full sequence is Prolactin-7A2 (250 aa).

A signal peptide spans 1-29 (MQLSFSRPRPWTLLLMVVSNLLLWENVSS). Asn26, Asn35, Asn102, and Asn134 each carry an N-linked (GlcNAc...) asparagine glycan. Disulfide bonds link Cys100–Cys215 and Cys232–Cys241.

This sequence belongs to the somatotropin/prolactin family. Expression restricted to placental tissues. Trophoblast giant cells are found to be the major source.

It localises to the secreted. The protein is Prolactin-7A2 (Prl7a2) of Rattus norvegicus (Rat).